We begin with the raw amino-acid sequence, 33 residues long: Photosystem II reaction center protein Psb30 (33 aa).

A helical membrane pass occupies residues Q8–F28.

This sequence belongs to the Psb30/Ycf12 family. PSII is composed of 1 copy each of membrane proteins PsbA, PsbB, PsbC, PsbD, PsbE, PsbF, PsbH, PsbI, PsbJ, PsbK, PsbL, PsbM, PsbT, PsbX, PsbY, PsbZ, Psb30/Ycf12, peripheral proteins of the oxygen-evolving complex and a large number of cofactors. It forms dimeric complexes.

The protein localises to the plastid. The protein resides in the chloroplast thylakoid membrane. Functionally, a core subunit of photosystem II (PSII), probably helps stabilize the reaction center. The sequence is that of Photosystem II reaction center protein Psb30 from Staurastrum punctulatum (Green alga).